Consider the following 379-residue polypeptide: Alcohol dehydrogenase 2 (379 aa).

Positions 47, 49, 69, 99, 102, 105, 113, and 177 each coordinate Zn(2+). Residues threonine 49 and histidine 69 each coordinate an alcohol. Residue threonine 49 coordinates NAD(+). NAD(+) contacts are provided by residues 202–207, aspartate 226, lysine 231, threonine 272, valine 295, 295–297, phenylalanine 322, and arginine 372; these read GLGAVG and VGV.

It belongs to the zinc-containing alcohol dehydrogenase family. As to quaternary structure, homodimer. Zn(2+) serves as cofactor.

The protein resides in the cytoplasm. The enzyme catalyses a primary alcohol + NAD(+) = an aldehyde + NADH + H(+). It carries out the reaction a secondary alcohol + NAD(+) = a ketone + NADH + H(+). This Zea mays (Maize) protein is Alcohol dehydrogenase 2 (ADH2).